The chain runs to 258 residues: Short-chain dehydrogenase/reductase aba4 (258 aa).

Positions 20, 66, and 130 each coordinate NADP(+). Catalysis depends on proton donor residues serine 146 and tyrosine 160. NADP(+) is bound by residues tyrosine 160, lysine 164, isoleucine 193, and threonine 195. Catalysis depends on lysine 164, which acts as the Lowers pKa of active site Tyr.

It belongs to the short-chain dehydrogenases/reductases (SDR) family.

It functions in the pathway hormone biosynthesis. Short-chain dehydrogenase/reductase; part of the gene cluster that mediates the biosynthesis of abscisic acid (ABA), a phytohormone that acts antagonistically toward salicylic acid (SA), jasmonic acid (JA) and ethylene (ETH) signaling, to impede plant defense responses. The first step of the pathway catalyzes the reaction from farnesyl diphosphate to alpha-ionylideneethane performed by the alpha-ionylideneethane synthase aba3 via a three-step reaction mechanism involving 2 neutral intermediates, beta-farnesene and allofarnesene. The cytochrome P450 monooxygenase aba1 might then be involved in the conversion of alpha-ionylideneethane to alpha-ionylideneacetic acid. Alpha-ionylideneacetic acid is further converted to abscisic acid in 2 steps involving the cytochrome P450 monooxygenase aba2 and the short-chain dehydrogenase/reductase aba4, via the intermediates 1'-deoxy-ABA or 1',4'-trans-diol-ABA, depending on the order of action of these 2 enzymes. Aba2 is responsible for the hydroxylation of carbon atom C-1' and aba4 might be involved in the oxidation of the C-4' carbon atom. This is Short-chain dehydrogenase/reductase aba4 from Botryotinia fuckeliana (strain B05.10) (Noble rot fungus).